The primary structure comprises 218 residues: Sec-independent protein translocase protein TatB (218 aa).

The helical transmembrane segment at 1-21 (MFDIGFSELLLVLVIGLVVLG) threads the bilayer. Disordered regions lie at residues 126–145 (AESATKAQASPQAPATDVDK) and 174–218 (SSVD…GGDR). Basic and acidic residues predominate over residues 199 to 218 (HSTDSHGADQPRTHQPGGDR).

It belongs to the TatB family. As to quaternary structure, the Tat system comprises two distinct complexes: a TatABC complex, containing multiple copies of TatA, TatB and TatC subunits, and a separate TatA complex, containing only TatA subunits. Substrates initially bind to the TatABC complex, which probably triggers association of the separate TatA complex to form the active translocon.

Its subcellular location is the cell inner membrane. Its function is as follows. Part of the twin-arginine translocation (Tat) system that transports large folded proteins containing a characteristic twin-arginine motif in their signal peptide across membranes. Together with TatC, TatB is part of a receptor directly interacting with Tat signal peptides. TatB may form an oligomeric binding site that transiently accommodates folded Tat precursor proteins before their translocation. This Yersinia enterocolitica serotype O:8 / biotype 1B (strain NCTC 13174 / 8081) protein is Sec-independent protein translocase protein TatB.